A 597-amino-acid chain; its full sequence is Elongation factor 4 (597 aa).

Positions 2–184 (KHIRNFSIIA…KIVSAIPAPE (183 aa)) constitute a tr-type G domain. GTP contacts are provided by residues 14–19 (DHGKST) and 131–134 (NKID).

The protein belongs to the TRAFAC class translation factor GTPase superfamily. Classic translation factor GTPase family. LepA subfamily.

It localises to the cell inner membrane. The catalysed reaction is GTP + H2O = GDP + phosphate + H(+). Functionally, required for accurate and efficient protein synthesis under certain stress conditions. May act as a fidelity factor of the translation reaction, by catalyzing a one-codon backward translocation of tRNAs on improperly translocated ribosomes. Back-translocation proceeds from a post-translocation (POST) complex to a pre-translocation (PRE) complex, thus giving elongation factor G a second chance to translocate the tRNAs correctly. Binds to ribosomes in a GTP-dependent manner. This Vibrio vulnificus (strain CMCP6) protein is Elongation factor 4.